The sequence spans 201 residues: MPIGTPSVPYRLPGSQYERWVDIYTRLGVERILFLGQEVNDGIANSLVAQMLYLDSDDNTKPIYLYINSPGGSVTAGLAIYDTIKYVKSDVVTICVGLAASMGAFLLGAGTKGKRVALPHSRIMIHQPLGGTSQRQASDIEIEAREILRIKDMLNHSMSDMTGQSFEKIEKDTDRDYFLSAEEAKNYGLIDRVISHPSEAS.

The Nucleophile role is filled by Ser101. His126 is a catalytic residue.

The protein belongs to the peptidase S14 family. Fourteen ClpP subunits assemble into 2 heptameric rings which stack back to back to give a disk-like structure with a central cavity, resembling the structure of eukaryotic proteasomes.

The protein localises to the cytoplasm. The catalysed reaction is Hydrolysis of proteins to small peptides in the presence of ATP and magnesium. alpha-casein is the usual test substrate. In the absence of ATP, only oligopeptides shorter than five residues are hydrolyzed (such as succinyl-Leu-Tyr-|-NHMec, and Leu-Tyr-Leu-|-Tyr-Trp, in which cleavage of the -Tyr-|-Leu- and -Tyr-|-Trp bonds also occurs).. In terms of biological role, cleaves peptides in various proteins in a process that requires ATP hydrolysis. Has a chymotrypsin-like activity. Plays a major role in the degradation of misfolded proteins. The sequence is that of ATP-dependent Clp protease proteolytic subunit 2 from Prochlorococcus marinus subsp. pastoris (strain CCMP1986 / NIES-2087 / MED4).